The sequence spans 89 residues: Protein YxiC (89 aa).

In Bacillus subtilis (strain 168), this protein is Protein YxiC (yxiC).